Consider the following 592-residue polypeptide: Bifunctional enzyme BirA/CoaX (592 aa).

The biotin--protein ligase stretch occupies residues 1–329 (MTVLKPSHWR…ISLRPDNRSV (329 aa)). Residues 83–259 (QTALKHECAS…ELGAVLEQYA (177 aa)) enclose the BPL/LPL catalytic domain. Residues 336 to 592 (DSERFLLLEG…AAEGGESEHA (257 aa)) form a type III pantothenate kinase region. Residue 344-351 (EGGNSRLK) coordinates ATP. Substrate-binding positions include Y426 and 433–436 (GSDR). D435 (proton acceptor) is an active-site residue. T458 lines the ATP pocket. T508 contacts substrate.

It in the N-terminal section; belongs to the biotin--protein ligase family. The protein in the C-terminal section; belongs to the type III pantothenate kinase family. The cofactor is NH4(+). Requires K(+) as cofactor.

It localises to the cytoplasm. The catalysed reaction is biotin + L-lysyl-[protein] + ATP = N(6)-biotinyl-L-lysyl-[protein] + AMP + diphosphate + H(+). The enzyme catalyses (R)-pantothenate + ATP = (R)-4'-phosphopantothenate + ADP + H(+). Its pathway is cofactor biosynthesis; coenzyme A biosynthesis; CoA from (R)-pantothenate: step 1/5. Functionally, activates biotin to form biotinyl-5'-adenylate and transfers the biotin moiety to biotin-accepting proteins. In terms of biological role, catalyzes the phosphorylation of pantothenate (Pan), the first step in CoA biosynthesis. The polypeptide is Bifunctional enzyme BirA/CoaX (birA/coaX) (Neisseria gonorrhoeae (strain ATCC 700825 / FA 1090)).